A 298-amino-acid polypeptide reads, in one-letter code: Protease HtpX (298 aa).

Helical transmembrane passes span 4 to 24 and 38 to 58; these read IGLFLLTNIAVLAVAMITMNL and LGNLFAFAAIIGFAGSFVSLA. His-145 contacts Zn(2+). The active site involves Glu-146. His-149 contributes to the Zn(2+) binding site. The next 2 helical transmembrane spans lie at 160-180 and 194-214; these read LLQGVVNTFVIFFAKIVAYVV and ITFIVVDIVAQILFGILASMI. Glu-223 contacts Zn(2+).

This sequence belongs to the peptidase M48B family. The cofactor is Zn(2+).

The protein localises to the cell inner membrane. This chain is Protease HtpX, found in Hydrogenovibrio crunogenus (strain DSM 25203 / XCL-2) (Thiomicrospira crunogena).